Reading from the N-terminus, the 559-residue chain is Probable 2-ketoarginine decarboxylase AruI (559 aa).

Residue Glu76 coordinates thiamine diphosphate.

The protein belongs to the TPP enzyme family. It depends on thiamine diphosphate as a cofactor.

It catalyses the reaction 5-guanidino-2-oxopentanoate + H(+) = 4-guanidinobutanal + CO2. The protein operates within amino-acid degradation; L-arginine degradation. In terms of biological role, catalyzes the decarboxylation of 2-ketoarginine, leading to the formation of 4-guanidinobutyraldehyde. The protein is Probable 2-ketoarginine decarboxylase AruI (aruI) of Pseudomonas aeruginosa (strain ATCC 15692 / DSM 22644 / CIP 104116 / JCM 14847 / LMG 12228 / 1C / PRS 101 / PAO1).